A 380-amino-acid chain; its full sequence is Protein FAM110B (380 aa).

A disordered region spans residues 92-272 (ALGSPTLKGF…RPSLQRSKSD (181 aa)). Residues 100 to 110 (GFGGGGGGAKS) show a composition bias toward gly residues. The segment covering 127–138 (ILNSSEGSSTGS) has biased composition (polar residues). Over residues 153–162 (DAAELHRHSF) the composition is skewed to basic and acidic residues. The span at 239–248 (KVAAPAAVKS) shows a compositional bias: low complexity. Residues Ser248 and Ser311 each carry the phosphoserine modification. The tract at residues 327–347 (DCEQSQDSNSDLRNDDSANDR) is disordered. Positions 336-345 (SDLRNDDSAN) are enriched in basic and acidic residues.

Belongs to the FAM110 family.

It is found in the cytoplasm. The protein resides in the cytoskeleton. Its subcellular location is the microtubule organizing center. The protein localises to the centrosome. The sequence is that of Protein FAM110B (FAM110B) from Bos taurus (Bovine).